The sequence spans 174 residues: Bifunctional protein PyrR (174 aa).

Residues 97-109 carry the PRPP-binding motif; that stretch reads VVIVDDVLYTGRT.

Belongs to the purine/pyrimidine phosphoribosyltransferase family. PyrR subfamily. Homodimer and homohexamer; in equilibrium.

It carries out the reaction UMP + diphosphate = 5-phospho-alpha-D-ribose 1-diphosphate + uracil. In terms of biological role, regulates transcriptional attenuation of the pyrimidine nucleotide (pyr) operon by binding in a uridine-dependent manner to specific sites on pyr mRNA. This disrupts an antiterminator hairpin in the RNA and favors formation of a downstream transcription terminator, leading to a reduced expression of downstream genes. Functionally, also displays a weak uracil phosphoribosyltransferase activity which is not physiologically significant. This Macrococcus caseolyticus (strain JCSC5402) (Macrococcoides caseolyticum) protein is Bifunctional protein PyrR.